We begin with the raw amino-acid sequence, 145 residues long: Large ribosomal subunit protein uL11 (145 aa).

The protein belongs to the universal ribosomal protein uL11 family. As to quaternary structure, part of the ribosomal stalk of the 50S ribosomal subunit. Interacts with L10 and the large rRNA to form the base of the stalk. L10 forms an elongated spine to which L12 dimers bind in a sequential fashion forming a multimeric L10(L12)X complex. Post-translationally, one or more lysine residues are methylated.

Its function is as follows. Forms part of the ribosomal stalk which helps the ribosome interact with GTP-bound translation factors. The protein is Large ribosomal subunit protein uL11 of Rickettsia akari (strain Hartford).